A 206-amino-acid polypeptide reads, in one-letter code: 2,3-bisphosphoglycerate-dependent phosphoglycerate mutase (206 aa).

Substrate-binding positions include Arg-9–Asn-16, Thr-22–Gly-23, Arg-61, Glu-88–Tyr-91, Lys-99, Arg-115–Arg-116, and Gly-159–Asn-160. His-10 (tele-phosphohistidine intermediate) is an active-site residue. Catalysis depends on Glu-88, which acts as the Proton donor/acceptor.

This sequence belongs to the phosphoglycerate mutase family. BPG-dependent PGAM subfamily. In terms of assembly, homodimer.

It catalyses the reaction (2R)-2-phosphoglycerate = (2R)-3-phosphoglycerate. It participates in carbohydrate degradation; glycolysis; pyruvate from D-glyceraldehyde 3-phosphate: step 3/5. In terms of biological role, catalyzes the interconversion of 2-phosphoglycerate and 3-phosphoglycerate. This chain is 2,3-bisphosphoglycerate-dependent phosphoglycerate mutase, found in Methylocella silvestris (strain DSM 15510 / CIP 108128 / LMG 27833 / NCIMB 13906 / BL2).